A 218-amino-acid chain; its full sequence is Grancalcin (218 aa).

4 consecutive EF-hand domains span residues serine 49–serine 84, glycine 85–tryptophan 119, serine 120–arginine 155, and leucine 156–aspartate 191. Residues aspartate 103, aspartate 105, threonine 107, lysine 109, aspartate 133, aspartate 135, serine 137, threonine 139, and glutamate 144 each coordinate Ca(2+).

In terms of assembly, homodimer. Interacts with SRI and LCP1.

Its subcellular location is the cytoplasm. It is found in the cytoplasmic granule membrane. Functionally, calcium-binding protein that may play a role in the adhesion of neutrophils to fibronectin. May play a role in the formation of focal adhesions. The chain is Grancalcin (GCA) from Pongo abelii (Sumatran orangutan).